Consider the following 868-residue polypeptide: Spindle and centriole-associated protein 1 (868 aa).

Disordered stretches follow at residues 129–154 (RTGF…DPGT), 172–201 (DDGG…HSNR), 229–250 (IAAQ…AEDQ), and 291–326 (KPLL…LASS). 2 stretches are compositionally biased toward polar residues: residues 190–200 (ELPNSLSPHSN) and 229–245 (IAAQ…SSEL). Threonine 236 carries the post-translational modification Phosphothreonine. Phosphoserine is present on serine 240. Residues 315-326 (SSSTTSADLASS) are compositionally biased toward low complexity. A coiled-coil region spans residues 381–434 (RYLKESETQLRKEVETRQQLEQMLGDHRELIDALTAEILLLREENGAVQARLQQ). Disordered stretches follow at residues 630–664 (PQFV…LGDG) and 702–722 (SSGG…NASE). The span at 634-649 (SLSQPPCSSPPSTQQS) shows a compositional bias: low complexity. A Phosphoserine modification is found at serine 655. A compositionally biased stretch (basic and acidic residues) spans 706 to 715 (EHGDGLREPS). Residues 736 to 764 (SSMEERIAELNRQSMEARSKLLQLIEQQK) are a coiled coil. Phosphoserine occurs at positions 772, 773, 776, and 831. Residues 805–868 (SSKCNTVSPV…GWFALSAHLP (64 aa)) form a disordered region. Over residues 812–831 (SPVSGVSSRRSSGAISNSCS) the composition is skewed to low complexity.

As to quaternary structure, interacts with CEP120.

It is found in the cytoplasm. It localises to the cytoskeleton. The protein localises to the microtubule organizing center. Its subcellular location is the centrosome. The protein resides in the centriole. It is found in the spindle. Regulator required for centriole duplication, for proper bipolar spindle formation and chromosome congression in mitosis. The sequence is that of Spindle and centriole-associated protein 1 (Spice1) from Rattus norvegicus (Rat).